The following is a 617-amino-acid chain: Probable Xaa-Pro aminopeptidase P (617 aa).

The Mn(2+) site is built by D414, D425, E523, and E537.

Belongs to the peptidase M24B family. Mn(2+) serves as cofactor.

The catalysed reaction is Release of any N-terminal amino acid, including proline, that is linked to proline, even from a dipeptide or tripeptide.. Its function is as follows. Catalyzes the removal of a penultimate prolyl residue from the N-termini of peptides. In Ajellomyces capsulatus (strain G186AR / H82 / ATCC MYA-2454 / RMSCC 2432) (Darling's disease fungus), this protein is Probable Xaa-Pro aminopeptidase P (AMPP).